The following is a 456-amino-acid chain: Argininosuccinate lyase (456 aa).

The protein belongs to the lyase 1 family. Argininosuccinate lyase subfamily.

The protein resides in the cytoplasm. The enzyme catalyses 2-(N(omega)-L-arginino)succinate = fumarate + L-arginine. The protein operates within amino-acid biosynthesis; L-arginine biosynthesis; L-arginine from L-ornithine and carbamoyl phosphate: step 3/3. This chain is Argininosuccinate lyase, found in Listeria monocytogenes serotype 4a (strain HCC23).